A 129-amino-acid polypeptide reads, in one-letter code: Large ribosomal subunit protein bL19 (129 aa).

This protein is located at the 30S-50S ribosomal subunit interface and may play a role in the structure and function of the aminoacyl-tRNA binding site. This Rhodopseudomonas palustris (strain ATCC BAA-98 / CGA009) protein is Large ribosomal subunit protein bL19.